Consider the following 366-residue polypeptide: 3-dehydroquinate synthase (366 aa).

Residues 71–76 (DGEKYK), 105–109 (GVIGD), 129–130 (TT), lysine 142, lysine 151, and 169–172 (TLQT) contribute to the NAD(+) site. Zn(2+) is bound by residues glutamate 184, histidine 247, and histidine 264.

The protein belongs to the sugar phosphate cyclases superfamily. Dehydroquinate synthase family. It depends on Co(2+) as a cofactor. Zn(2+) serves as cofactor. Requires NAD(+) as cofactor.

The protein localises to the cytoplasm. The catalysed reaction is 7-phospho-2-dehydro-3-deoxy-D-arabino-heptonate = 3-dehydroquinate + phosphate. It participates in metabolic intermediate biosynthesis; chorismate biosynthesis; chorismate from D-erythrose 4-phosphate and phosphoenolpyruvate: step 2/7. In terms of biological role, catalyzes the conversion of 3-deoxy-D-arabino-heptulosonate 7-phosphate (DAHP) to dehydroquinate (DHQ). The chain is 3-dehydroquinate synthase from Actinobacillus pleuropneumoniae serotype 5b (strain L20).